The chain runs to 328 residues: Surface antigen CRP170 (328 aa).

2 repeats span residues 38-102 (NAPC…CKKC) and 103-167 (NAPC…CKKC).

The polypeptide is Surface antigen CRP170 (Giardia intestinalis (Giardia lamblia)).